We begin with the raw amino-acid sequence, 25 residues long: Pregnancy-associated glycoprotein 59g (25 aa).

The N-linked (GlcNAc...) asparagine glycan is linked to asparagine 4.

Belongs to the peptidase A1 family. Highly expressed in the placenta between day 60 and day 100 of gestation.

Its subcellular location is the secreted. It is found in the extracellular space. The polypeptide is Pregnancy-associated glycoprotein 59g (Ovis aries (Sheep)).